A 441-amino-acid chain; its full sequence is Chitinase-like protein Idgf3 (441 aa).

Residues 1–23 form the signal peptide; the sequence is MTGSLWLSLALSLAVLAQFKVSA. Residues 25-441 enclose the GH18 domain; the sequence is PNLVCFYDSQ…MLRAIKYRLL (417 aa). Cys29 and Cys56 are disulfide-bonded. Residue Asn221 is glycosylated (N-linked (GlcNAc...) asparagine). A disordered region spans residues 307–331; the sequence is KDSGDSGMPVVPSTQGPAPAGPQSK. Cysteines 342 and 425 form a disulfide.

This sequence belongs to the glycosyl hydrolase 18 family. IDGF subfamily. Post-translationally, glycosylated. Primarily expressed in yolk cells and fat body. In larvae, it is expressed in small and large salivary gland cells, and weakly expressed in imaginal disks. Less expressed than Idgf2 and Idgf4.

It localises to the secreted. Functionally, cooperates with insulin-like peptides to stimulate the proliferation, polarization and motility of imaginal disk cells. May act by stabilizing the binding of insulin-like peptides to its receptor through a simultaneous interaction with both molecules to form a multiprotein signaling complex. This is Chitinase-like protein Idgf3 (Idgf3) from Drosophila melanogaster (Fruit fly).